Reading from the N-terminus, the 296-residue chain is Nitrogenase iron protein (296 aa).

ATP is bound at residue 13 to 20 (GKGGIGKS). Residue Cys101 participates in [4Fe-4S] cluster binding. Arg104 carries the post-translational modification ADP-ribosylarginine; by dinitrogenase reductase ADP-ribosyltransferase. Cys135 contributes to the [4Fe-4S] cluster binding site.

This sequence belongs to the NifH/BchL/ChlL family. Homodimer. [4Fe-4S] cluster is required as a cofactor. In terms of processing, the reversible ADP-ribosylation of Arg-104 inactivates the nitrogenase reductase and regulates nitrogenase activity.

The catalysed reaction is N2 + 8 reduced [2Fe-2S]-[ferredoxin] + 16 ATP + 16 H2O = H2 + 8 oxidized [2Fe-2S]-[ferredoxin] + 2 NH4(+) + 16 ADP + 16 phosphate + 6 H(+). Functionally, the key enzymatic reactions in nitrogen fixation are catalyzed by the nitrogenase complex, which has 2 components: the iron protein and the molybdenum-iron protein. The polypeptide is Nitrogenase iron protein (nifH) (Leptolyngbya boryana (Plectonema boryanum)).